A 340-amino-acid polypeptide reads, in one-letter code: Putative inactive cytochrome P450 family member 4Z2 (340 aa).

Residues 1–9 (MEPSWLQEL) lie on the Cytoplasmic side of the membrane. Residues 10–30 (MAHPFLLLILLCMSLLLFQVI) traverse the membrane as a helical; Signal-anchor for type II membrane protein segment. Over 31 to 340 (RLYQRRRWTI…AKYPEHQQRC (310 aa)) the chain is Lumenal.

It belongs to the cytochrome P450 family. Heme is required as a cofactor. As to expression, detected at low levels in mammary gland and mammary carcinoma.

The protein localises to the membrane. The protein is Putative inactive cytochrome P450 family member 4Z2 (CYP4Z2P) of Homo sapiens (Human).